The chain runs to 109 residues: Fluoride-specific ion channel FluC 1 (109 aa).

The next 3 helical transmembrane spans lie at 21–41, 52–72, and 84–104; these read LFIN…GFFI, IILS…YFLY, and IIFC…GFWI.

This sequence belongs to the fluoride channel Fluc/FEX (TC 1.A.43) family.

Its subcellular location is the cell inner membrane. It catalyses the reaction fluoride(in) = fluoride(out). Functionally, fluoride-specific ion channel. Important for reducing fluoride concentration in the cell, thus reducing its toxicity. The protein is Fluoride-specific ion channel FluC 1 of Prochlorococcus marinus (strain MIT 9312).